The primary structure comprises 329 residues: Peroxidase 73 (329 aa).

The signal sequence occupies residues 1–25 (MARFSLVVVVTLSLAISMFPDTTTA). Disulfide bonds link Cys36–Cys119, Cys69–Cys74, Cys125–Cys325, and Cys204–Cys236. Catalysis depends on His67, which acts as the Proton acceptor. 5 residues coordinate Ca(2+): Asp68, Val71, Gly73, Asp75, and Ser77. Pro167 lines the substrate pocket. His197 contacts heme b. Thr198 lines the Ca(2+) pocket. Asn215 carries an N-linked (GlcNAc...) asparagine glycan. Residues Asp249, Thr252, and Asp257 each contribute to the Ca(2+) site.

This sequence belongs to the peroxidase family. Classical plant (class III) peroxidase subfamily. The cofactor is heme b. Ca(2+) serves as cofactor. In terms of tissue distribution, expressed in the whole plant, with the highest expression in roots.

The protein resides in the secreted. It carries out the reaction 2 a phenolic donor + H2O2 = 2 a phenolic radical donor + 2 H2O. Removal of H(2)O(2), oxidation of toxic reductants, biosynthesis and degradation of lignin, suberization, auxin catabolism, response to environmental stresses such as wounding, pathogen attack and oxidative stress. These functions might be dependent on each isozyme/isoform in each plant tissue. The sequence is that of Peroxidase 73 (PER73) from Arabidopsis thaliana (Mouse-ear cress).